Here is a 450-residue protein sequence, read N- to C-terminus: 23S rRNA (uracil(1939)-C(5))-methyltransferase RlmD (450 aa).

In terms of domain architecture, TRAM spans 1-62 (MPVAGPLEIV…PSYEQATLVD (62 aa)). The [4Fe-4S] cluster site is built by Cys-75, Cys-81, Cys-84, and Cys-163. S-adenosyl-L-methionine-binding residues include Gln-271, Phe-300, Asn-305, Glu-321, Asn-349, and Asp-370. Catalysis depends on Cys-406, which acts as the Nucleophile.

The protein belongs to the class I-like SAM-binding methyltransferase superfamily. RNA M5U methyltransferase family. RlmD subfamily.

It carries out the reaction uridine(1939) in 23S rRNA + S-adenosyl-L-methionine = 5-methyluridine(1939) in 23S rRNA + S-adenosyl-L-homocysteine + H(+). In terms of biological role, catalyzes the formation of 5-methyl-uridine at position 1939 (m5U1939) in 23S rRNA. The protein is 23S rRNA (uracil(1939)-C(5))-methyltransferase RlmD of Ralstonia nicotianae (strain ATCC BAA-1114 / GMI1000) (Ralstonia solanacearum).